The following is a 130-amino-acid chain: Nascent polypeptide-associated complex protein (130 aa).

The 69-residue stretch at 6-74 folds into the NAC-A/B domain; it reads GMNPRKMQQM…PVERDAADAI (69 aa). Positions 65–91 are disordered; that stretch reads PVERDAADAIEAAPADDSDDTDDDDAI. The span at 78-90 shows a compositional bias: acidic residues; the sequence is PADDSDDTDDDDA.

Belongs to the NAC-alpha family. Homodimer. Interacts with the ribosome. Binds ribosomal RNA.

Functionally, contacts the emerging nascent chain on the ribosome. The protein is Nascent polypeptide-associated complex protein of Halobacterium salinarum (strain ATCC 700922 / JCM 11081 / NRC-1) (Halobacterium halobium).